Reading from the N-terminus, the 131-residue chain is Small ribosomal subunit protein uS8 (131 aa).

The protein belongs to the universal ribosomal protein uS8 family. In terms of assembly, part of the 30S ribosomal subunit. Contacts proteins S5 and S12.

In terms of biological role, one of the primary rRNA binding proteins, it binds directly to 16S rRNA central domain where it helps coordinate assembly of the platform of the 30S subunit. The polypeptide is Small ribosomal subunit protein uS8 (Ruthia magnifica subsp. Calyptogena magnifica).